Here is a 485-residue protein sequence, read N- to C-terminus: Cobyric acid synthase (485 aa).

A GATase cobBQ-type domain is found at 249–437 (HLKIRVPVWQ…WHGLFSQPSA (189 aa)). The active-site Nucleophile is Cys330. The active site involves His429.

The protein belongs to the CobB/CobQ family. CobQ subfamily.

Its pathway is cofactor biosynthesis; adenosylcobalamin biosynthesis. Catalyzes amidations at positions B, D, E, and G on adenosylcobyrinic A,C-diamide. NH(2) groups are provided by glutamine, and one molecule of ATP is hydrogenolyzed for each amidation. In Saccharophagus degradans (strain 2-40 / ATCC 43961 / DSM 17024), this protein is Cobyric acid synthase.